The chain runs to 65 residues: uncharacterized protein (65 aa).

Catalysis depends on C9, which acts as the Nucleophile. Residue R15 is part of the active site.

The protein belongs to the low molecular weight phosphotyrosine protein phosphatase family.

This is an uncharacterized protein from Synechococcus sp. (strain WH8020).